The following is a 945-amino-acid chain: Translation initiation factor IF-2 (945 aa).

Disordered stretches follow at residues 52-80 (RSHGQSQPKGKITLTRKQTSEIRATDSSG) and 96-357 (MKRD…FQAP). Positions 153–175 (PEPEPIVEPEPEPEPEPEPEPQP) are enriched in acidic residues. 2 stretches are compositionally biased toward basic and acidic residues: residues 215–283 (DEER…KEAA) and 294–310 (AKTEEKPAGKDAKRTAR). Residues 445–614 (PRAPVVTVMG…LLQAEVLELT (170 aa)) enclose the tr-type G domain. The tract at residues 454 to 461 (GHVDHGKT) is G1. 454–461 (GHVDHGKT) provides a ligand contact to GTP. The interval 479–483 (GITQH) is G2. Residues 500-503 (DTPG) form a G3 region. GTP is bound by residues 500–504 (DTPGH) and 554–557 (NKID). Residues 554–557 (NKID) are G4. Residues 590-592 (SAK) form a G5 region.

This sequence belongs to the TRAFAC class translation factor GTPase superfamily. Classic translation factor GTPase family. IF-2 subfamily.

It localises to the cytoplasm. Functionally, one of the essential components for the initiation of protein synthesis. Protects formylmethionyl-tRNA from spontaneous hydrolysis and promotes its binding to the 30S ribosomal subunits. Also involved in the hydrolysis of GTP during the formation of the 70S ribosomal complex. The polypeptide is Translation initiation factor IF-2 (Aromatoleum aromaticum (strain DSM 19018 / LMG 30748 / EbN1) (Azoarcus sp. (strain EbN1))).